A 354-amino-acid chain; its full sequence is Probable L-ascorbate-6-phosphate lactonase UlaG (354 aa).

Belongs to the UlaG family. A divalent metal cation serves as cofactor.

The protein resides in the cytoplasm. The catalysed reaction is L-ascorbate 6-phosphate + H2O = 3-dehydro-L-gulonate 6-phosphate. It participates in cofactor degradation; L-ascorbate degradation; D-xylulose 5-phosphate from L-ascorbate: step 1/4. Its function is as follows. Probably catalyzes the hydrolysis of L-ascorbate-6-P into 3-keto-L-gulonate-6-P. Is essential for L-ascorbate utilization under anaerobic conditions. This chain is Probable L-ascorbate-6-phosphate lactonase UlaG, found in Salmonella agona (strain SL483).